The following is a 628-amino-acid chain: Phosphomethylpyrimidine synthase (628 aa).

Over residues 1–14 (MTISDIGSQATTHT) the composition is skewed to polar residues. Residues 1–37 (MTISDIGSQATTHTPVKASKADALKTPAHRSETDARF) form a disordered region. Basic and acidic residues predominate over residues 19–37 (SKADALKTPAHRSETDARF). Substrate is bound by residues Asn260, Met289, Tyr318, His354, 374 to 376 (SRG), 415 to 418 (DGLR), and Glu454. His458 lines the Zn(2+) pocket. Position 481 (Tyr481) interacts with substrate. His522 contributes to the Zn(2+) binding site. [4Fe-4S] cluster contacts are provided by Cys602, Cys605, and Cys610.

This sequence belongs to the ThiC family. Homodimer. It depends on [4Fe-4S] cluster as a cofactor.

It carries out the reaction 5-amino-1-(5-phospho-beta-D-ribosyl)imidazole + S-adenosyl-L-methionine = 4-amino-2-methyl-5-(phosphooxymethyl)pyrimidine + CO + 5'-deoxyadenosine + formate + L-methionine + 3 H(+). The protein operates within cofactor biosynthesis; thiamine diphosphate biosynthesis. Its function is as follows. Catalyzes the synthesis of the hydroxymethylpyrimidine phosphate (HMP-P) moiety of thiamine from aminoimidazole ribotide (AIR) in a radical S-adenosyl-L-methionine (SAM)-dependent reaction. In Psychrobacter cryohalolentis (strain ATCC BAA-1226 / DSM 17306 / VKM B-2378 / K5), this protein is Phosphomethylpyrimidine synthase.